Reading from the N-terminus, the 420-residue chain is Pyruvate dehydrogenase E1 component subunit alpha, mitochondrial (420 aa).

The N-terminal 33 residues, 1 to 33 (MLAASFKRQPSQLVRGLGAVLRTPTRIGHVRTM), are a transit peptide targeting the mitochondrion. Positions 112, 138, 139, 177, 185, 187, 216, 217, 218, 245, and 247 each coordinate pyruvate. Thiamine diphosphate-binding residues include Y138 and R139. Positions 185, 187, 216, 217, 218, and 245 each coordinate thiamine diphosphate. Residue D216 coordinates Mg(2+). Residues N245 and Y247 each coordinate Mg(2+). H312 is a thiamine diphosphate binding site. The residue at position 313 (S313) is a Phosphoserine; by PDK1 and PDK2.

In terms of assembly, pyruvate dehydrogenase (E1) is a tetramer of 2 alpha and 2 beta subunits. Eukaryotic pyruvate dehydrogenase (PDH) complexes are organized as a core consisting of the oligomeric dihydrolipoamide acetyl-transferase (E2), around which are arranged multiple copies of pyruvate dehydrogenase (E1), dihydrolipoamide dehydrogenase (E3) and protein X (E3BP) bound by non-covalent bonds. It depends on thiamine diphosphate as a cofactor. Mg(2+) is required as a cofactor. In terms of processing, phosphorylated at Ser-313 by pyruvate dehydrogenase kinases PKP1 (PDK1) and PKP2 (PDK2), and dephosphorylated by pyruvate dehydrogenase phosphatases PTC5 and PTC6.

The protein localises to the mitochondrion matrix. The catalysed reaction is N(6)-[(R)-lipoyl]-L-lysyl-[protein] + pyruvate + H(+) = N(6)-[(R)-S(8)-acetyldihydrolipoyl]-L-lysyl-[protein] + CO2. Its activity is regulated as follows. E1 activity is regulated by phosphorylation (inactivation) and dephosphorylation (activation) of the alpha subunit. The pyruvate dehydrogenase complex catalyzes the overall conversion of pyruvate to acetyl-CoA and CO(2). The protein is Pyruvate dehydrogenase E1 component subunit alpha, mitochondrial (PDA1) of Saccharomyces cerevisiae (strain ATCC 204508 / S288c) (Baker's yeast).